Consider the following 1505-residue polypeptide: MRKYVLFFISGNNDSQIWATTPNTPRVIARGGLERNIHTRTLARMVNEDAPGTSTPAAQSRLQTTASPFHRTHLTQMCRRGDTNASLLRDFTRMIRDTPRNFSKNTQHGNDRDFGDLERDPDVDLLLSKVCLECVYVEPKEGAIPKANKIFISNFLSDMYINLVSVTGEVMKIIPIWKNAETTRKNLLEKGKHEPCVVDCVDAAFVMKSGITVVLGSDFTTAMFGGNERIAPIFIKEMSNQRVGRKFRLFSFAENRIFAVNEMRCIVVEIPETVTCKSATELMRTCFLHLDRDLSRKLLIKWRSVKRDVDTERLDLDRKEMIDVAIFMLDNVGVRVTNVVAQERADSPEGHGGKQMRPRMSDSEVLSMMRQFFEEMTFRPKSEVITEDGYKCHLSVELDPNGEGFVHTQDLLHAFHSQCEDWSINTMMHSILLELIPYAYLLAKVMNYRAFEEYYVQLFKHLLSQIAIEFKIPPEIHEKFVGAIHIPKPCWSLNNVIAHIICERTTPETMESIPKFISKSSVRLLTILAVGRKFIGMGTNIDMDCERWLGKDWKRRIGLSGDILKSFRRIMNGKSSNSAGRASQLIELFEIGSITIDFMVLAVKVLMLKFQTDAFAGAQSIEPKKCIYATADEMISIAHLRWKNDIRMHNVQLMLNSSRPILIATNILRKNEDDNMKELQDRFLTQTSYRTFSQPFGRAFLDFRTAVPSLLTSIYIPRLNVGGMIYPSRVTCDPPTTEIFKLCTEWGNFYNSLASALRIGSSETVRIDNEWIVMVSKNIKSTAVIGGMTLGFGLNGHLAPFNMYHAHQMLSTFDKFHSVALLIGLSASNFTTCDVQIHKILATYLSFLMGPTPLEIKLDFTIQTAAISGLGLLFADSGNMTIAKKLVNEIGRAPNRDEEPVTDRNAYKLSAGFSLGLIMLGKGNGSASTVIPFKQNIPPMSQRLIYMMNGMRRDKCVFLPQVAPPVVNDVPNLPFSNGGMMTSSQVANHVKESEYINIHQSAEPAAIALGMMFMKMNNEFIANALALPGTITELERLKPDSMYSRVLAQCLVMWDSIEPTHDFVKSLIPPVIREYATAALHFGVPIRRDEDGEEVHEAINDAEEKYWAEIVDKGTVSQTFLYAVSAACMAIALKFSSCGGPNEKNIVNTAFRIIEYYTKIVMPDGKSNKDMGSIRMCIYSGAYTRTSCLSMLITAMAILRVGTGDLEVMRYARLLRLCDKPESDWIATGKKHFEQMVAHQALGILMLGEGRYAFKKDDLSIALTIISTFPTIPQSVSDNSHYHQPLRFLWSMAVEPRLLVPFDIAESCVVEVDVTIVMKPKDGNEPIVYKEKAPYLLPPLEDLQSISIGGGNYQLVHISLQSEDQVKVMKDIMTIGQGRVMLKRYGVDSSEMKIKEATTLYDDTPSLMSMFNNEDTAVELDEYEIQCMMEKIDEGINLNSSDEYPNVQIELSCVRDVTERTTMDLAQLQKRSLKLLSESLDLWQDEVNVSNTINGLADAVQDMQI.

Belongs to the APC1 family. In terms of assembly, the APC/C complex is probably composed of at least 12 subunits: apc-2, apc-10, apc-11, cdc-26, emb-1, emb-27, emb-30, mat-1, mat-2, mat-3, such-1 and gfi-3.

It participates in protein modification; protein ubiquitination. Functionally, probable component of the anaphase promoting complex/cyclosome (APC/C), a cell cycle-regulated E3 ubiquitin ligase that controls progression through mitosis and the G1 phase of the cell cycle. The APC/C complex acts by mediating ubiquitination and subsequent degradation of target proteins. Developmental role in early embryogenesis and the metaphase to anaphase transition in oocyte and spermatocyte meiosis and mitosis in germ cells. Required for embryonic anterior-posterior axis formation. Plays a role in regulating the abundance of glr-1 receptors in postmitotic neurons, which may in turn control animal locomotion. Involved in regulating GABA neurotransmitter release at neuromuscular junctions in GABA motor neurons. The polypeptide is Anaphase-promoting complex subunit 1 (Caenorhabditis elegans).